Here is a 252-residue protein sequence, read N- to C-terminus: tRNA (guanine-N(1)-)-methyltransferase (252 aa).

S-adenosyl-L-methionine-binding positions include Gly-110 and 130-135 (VGDFVL).

It belongs to the RNA methyltransferase TrmD family. As to quaternary structure, homodimer.

The protein resides in the cytoplasm. It catalyses the reaction guanosine(37) in tRNA + S-adenosyl-L-methionine = N(1)-methylguanosine(37) in tRNA + S-adenosyl-L-homocysteine + H(+). Specifically methylates guanosine-37 in various tRNAs. The polypeptide is tRNA (guanine-N(1)-)-methyltransferase (Magnetococcus marinus (strain ATCC BAA-1437 / JCM 17883 / MC-1)).